The primary structure comprises 649 residues: 1-deoxy-D-xylulose-5-phosphate synthase 1 (649 aa).

Thiamine diphosphate contacts are provided by residues His73 and 113 to 115; that span reads SHA. Asp144 contributes to the Mg(2+) binding site. Thiamine diphosphate contacts are provided by residues 145-146, Asn174, Tyr285, and Glu367; that span reads GA. Asn174 is a binding site for Mg(2+). The disordered stretch occupies residues 623 to 649; that stretch reads LLPGTGTRPGAQEYRPRMPLTDWSEPA.

It belongs to the transketolase family. DXPS subfamily. As to quaternary structure, homodimer. Requires Mg(2+) as cofactor. It depends on thiamine diphosphate as a cofactor.

It carries out the reaction D-glyceraldehyde 3-phosphate + pyruvate + H(+) = 1-deoxy-D-xylulose 5-phosphate + CO2. It participates in metabolic intermediate biosynthesis; 1-deoxy-D-xylulose 5-phosphate biosynthesis; 1-deoxy-D-xylulose 5-phosphate from D-glyceraldehyde 3-phosphate and pyruvate: step 1/1. Its function is as follows. Catalyzes the acyloin condensation reaction between C atoms 2 and 3 of pyruvate and glyceraldehyde 3-phosphate to yield 1-deoxy-D-xylulose-5-phosphate (DXP). The polypeptide is 1-deoxy-D-xylulose-5-phosphate synthase 1 (Kitasatospora griseola (Streptomyces griseolosporeus)).